The following is a 507-amino-acid chain: Iroquois-class homeodomain protein IRX-3 (507 aa).

Residues 19–39 (RPGAAGGGGGGSSAGGRSGPG) are disordered. Positions 22–39 (AAGGGGGGSSAGGRSGPG) are enriched in gly residues. Positions 130–192 (DPSRPKNATR…NARRRLKKEN (63 aa)) form a DNA-binding region, homeobox; TALE-type. Disordered stretches follow at residues 193–398 (KMTW…AAAA) and 416–468 (RPFP…SGTD). Acidic residues-rich tracts occupy residues 213–223 (REEEDEEEDEE) and 230–261 (EMEE…DLEN). Pro residues-rich tracts occupy residues 314-342 (APPP…PAPA) and 418-428 (FPGPPAGPRPH). S326 and S329 each carry phosphoserine. The segment covering 436-460 (APQHLLGLPGAAGHPAAAAAAYARP) has biased composition (low complexity).

The protein belongs to the TALE/IRO homeobox family. Expressed by neural progenitor cells in discrete domains of the ventral neural tube. Also expressed in specific and overlapping patterns with Irx1 and Irx2 in the developing and adult metanephric kidney. In the adult metanephros, renal expression is confined to the S3 segment of the proximal tubule, in the loop of Henle.

The protein localises to the nucleus. In terms of biological role, transcription factor involved in SHH-dependent neural patterning. Together with NKX2-2 and NKX6-1 acts to restrict the generation of motor neurons to the appropriate region of the neural tube. Belongs to the class I proteins of neuronal progenitor factors, which are repressed by SHH signals. Involved in the transcriptional repression of MNX1 in non-motor neuron cells. Acts as a regulator of energy metabolism. The sequence is that of Iroquois-class homeodomain protein IRX-3 (Irx3) from Mus musculus (Mouse).